Consider the following 448-residue polypeptide: B-cell lymphoma 3 protein homolog (448 aa).

Positions 1–54 (MPRCPAGAMDEGPVDLRTRPKGTPGAALPLRKRPLRPASPEPATTRSPAGPLDA) are disordered. S39 is modified (phosphoserine). ANK repeat units lie at residues 129-161 (DGDTPLHIAVVQNNIAAVYRILSLFKLGSREVD), 166-195 (LRQTPLHLAVITTLPDMVRLLVTAGASPMA), 199-228 (HGQTAIHLACEHRSPSCLQALLDSATSGSV), 236-265 (EGLTALHVAVNTGCQEAVLLLLERGADIDA), 270-299 (SGRSPLIHAVENNSLNMVQLLLLHGANVNA), 303-332 (SGSSALHSASGRGLLPLVRTLVRSGADSGL), and 333-362 (KNCHNDTPLMVARSRRVIDILRGKASRAAS). The interval 356-448 (KASRAASGSQ…VPPSPAPGSS (93 aa)) is disordered. Over residues 361–376 (ASGSQPEPSPDQSATN) the composition is skewed to polar residues. S369 bears the Phosphoserine mark. Residues 377–398 (SPESSSRLSSNGLQSSPSSSPS) show a composition bias toward low complexity. Phosphoserine; by GSK3 is present on residues S396 and S400. The segment covering 411–423 (TPQNFFLPTTSTP) has biased composition (polar residues). A compositionally biased stretch (low complexity) spans 425-436 (FLPFPGVLRGPG). Residues 437-448 (RPVPPSPAPGSS) show a composition bias toward pro residues.

Component of a complex consisting of the NF-kappa-B p52-p52 homodimer and BCL3. Component of a complex consisting of the NF-kappa-B p50-p50 homodimer and BCL3. Interacts with N4BP2, COPS5 and PIR. Interacts with CYLD. Polyubiquitinated. Ubiquitination via 'Lys-63'-linked ubiquitin chains is required for nuclear accumulation. Deubiquitinated by CYLD, which acts on 'Lys-63'-linked ubiquitin chains. Deubiquitination by CYLD prevents nuclear accumulation. Post-translationally, activated by phosphorylation.

It localises to the nucleus. Its subcellular location is the cytoplasm. It is found in the perinuclear region. Contributes to the regulation of transcriptional activation of NF-kappa-B target genes. In the cytoplasm, inhibits the nuclear translocation of the NF-kappa-B p50 subunit. In the nucleus, acts as a transcriptional activator that promotes transcription of NF-kappa-B target genes. Contributes to the regulation of cell proliferation. The sequence is that of B-cell lymphoma 3 protein homolog (Bcl3) from Mus musculus (Mouse).